Reading from the N-terminus, the 524-residue chain is Histidine ammonia-lyase (524 aa).

The 5-imidazolinone (Ala-Gly) cross-link spans A139–G141. At S140 the chain carries 2,3-didehydroalanine (Ser). Residues A500–H524 form a disordered region.

It belongs to the PAL/histidase family. Contains an active site 4-methylidene-imidazol-5-one (MIO), which is formed autocatalytically by cyclization and dehydration of residues Ala-Ser-Gly.

It localises to the cytoplasm. The enzyme catalyses L-histidine = trans-urocanate + NH4(+). It functions in the pathway amino-acid degradation; L-histidine degradation into L-glutamate; N-formimidoyl-L-glutamate from L-histidine: step 1/3. The polypeptide is Histidine ammonia-lyase (hutH) (Deinococcus radiodurans (strain ATCC 13939 / DSM 20539 / JCM 16871 / CCUG 27074 / LMG 4051 / NBRC 15346 / NCIMB 9279 / VKM B-1422 / R1)).